A 92-amino-acid chain; its full sequence is Large ribosomal subunit protein eL43z (92 aa).

The segment at 39–60 adopts a C4-type zinc-finger fold; that stretch reads CEFCGKFAVKRKAVGIWGCKDC.

This sequence belongs to the eukaryotic ribosomal protein eL43 family.

This is Large ribosomal subunit protein eL43z from Oryza sativa subsp. japonica (Rice).